A 226-amino-acid chain; its full sequence is Protein-L-isoaspartate O-methyltransferase (226 aa).

Serine 66 is a catalytic residue.

Belongs to the methyltransferase superfamily. L-isoaspartyl/D-aspartyl protein methyltransferase family.

The protein localises to the cytoplasm. It carries out the reaction [protein]-L-isoaspartate + S-adenosyl-L-methionine = [protein]-L-isoaspartate alpha-methyl ester + S-adenosyl-L-homocysteine. Catalyzes the methyl esterification of L-isoaspartyl residues in peptides and proteins that result from spontaneous decomposition of normal L-aspartyl and L-asparaginyl residues. It plays a role in the repair and/or degradation of damaged proteins. The polypeptide is Protein-L-isoaspartate O-methyltransferase (Methanopyrus kandleri (strain AV19 / DSM 6324 / JCM 9639 / NBRC 100938)).